Reading from the N-terminus, the 101-residue chain is MIPGELFTDGPEHVLNPGRRAHTLAVVNASDRPIQVGSHYHFAETNGALGFDRAAAKGMRLNIASGSAVRLEPGQQRTVELVDYAGDRIVYGFRGLTQGAL.

The protein belongs to the urease beta subunit family. As to quaternary structure, heterotrimer of UreA (gamma), UreB (beta) and UreC (alpha) subunits. Three heterotrimers associate to form the active enzyme.

The protein localises to the cytoplasm. The enzyme catalyses urea + 2 H2O + H(+) = hydrogencarbonate + 2 NH4(+). It functions in the pathway nitrogen metabolism; urea degradation; CO(2) and NH(3) from urea (urease route): step 1/1. This Albidiferax ferrireducens (strain ATCC BAA-621 / DSM 15236 / T118) (Rhodoferax ferrireducens) protein is Urease subunit beta.